A 607-amino-acid polypeptide reads, in one-letter code: UvrABC system protein C (607 aa).

In terms of domain architecture, GIY-YIG spans histidine 16 to isoleucine 94. The region spanning arginine 203–valine 238 is the UVR domain.

This sequence belongs to the UvrC family. Interacts with UvrB in an incision complex.

The protein resides in the cytoplasm. Its function is as follows. The UvrABC repair system catalyzes the recognition and processing of DNA lesions. UvrC both incises the 5' and 3' sides of the lesion. The N-terminal half is responsible for the 3' incision and the C-terminal half is responsible for the 5' incision. The chain is UvrABC system protein C from Bordetella avium (strain 197N).